We begin with the raw amino-acid sequence, 601 residues long: Elongation factor 4 (601 aa).

The tr-type G domain maps to 7–189 (DNIRNFSIVA…AIVKRLPAPK (183 aa)). GTP-binding positions include 19 to 24 (DHGKST) and 136 to 139 (NKVD).

The protein belongs to the TRAFAC class translation factor GTPase superfamily. Classic translation factor GTPase family. LepA subfamily.

Its subcellular location is the cell inner membrane. The enzyme catalyses GTP + H2O = GDP + phosphate + H(+). Its function is as follows. Required for accurate and efficient protein synthesis under certain stress conditions. May act as a fidelity factor of the translation reaction, by catalyzing a one-codon backward translocation of tRNAs on improperly translocated ribosomes. Back-translocation proceeds from a post-translocation (POST) complex to a pre-translocation (PRE) complex, thus giving elongation factor G a second chance to translocate the tRNAs correctly. Binds to ribosomes in a GTP-dependent manner. This chain is Elongation factor 4, found in Methylorubrum extorquens (strain CM4 / NCIMB 13688) (Methylobacterium extorquens).